The sequence spans 338 residues: Protein RecA (338 aa).

Residue 66-73 (GPESSGKT) participates in ATP binding.

Belongs to the RecA family.

Its subcellular location is the cytoplasm. Can catalyze the hydrolysis of ATP in the presence of single-stranded DNA, the ATP-dependent uptake of single-stranded DNA by duplex DNA, and the ATP-dependent hybridization of homologous single-stranded DNAs. It interacts with LexA causing its activation and leading to its autocatalytic cleavage. In Geobacter sulfurreducens (strain ATCC 51573 / DSM 12127 / PCA), this protein is Protein RecA.